The primary structure comprises 938 residues: MSVVQSSCAYCGVGCGVSVSSNKPNWTDVDAADLILVGDNKHPANYGHLCAKGERLLDSLAQPNVLRYPKLRSGMPLDWDKASTLIADTFAKTIAEHGPDSVALYLSGQLLTEDYYVANKFAKGFLKTANVDTNSRLCMSSAVSAMQRAFGEDVVPGCYDDLEQADVIVLVGANTAWTHPVLFQRILAAIKANNAQLVVIDPLSTATAKQADLHLAIKPGADLTLFHGLLGYLADQNRVDHAYIAAHTEGFDTVVLQAQQLSANLADLATQVGVSVTQLTQFYQLVANNKKVLTASCQGVNQSTIGTDATNAMINCHLALGHIGQAGCGFFSLTGQPNAMGGREVGGLATQLACHMGFSQPEQQLLADFWKVDSIADQKGLVAVEMFDALAEGKIKAIWIMGTNPVVSLPNSEKIAQALADCPFVVVSEISPDSDTAKLADVLLPAQGWSEKCGTVTNSERTITRQRGFITAKGQAKPDWWAVSQVAKKMGFDGFEFDDNASIFSEFAALSAKVKQVFPTKVFDLTGLTELSKAQYDALAPTQWPIASATQIGQQNVRVFGLGEFATATGKAQFVTPAVVSVPQQSLPSNTLLLNTGRSRDQWHTMTRTGHIASLRASIPEPVVHLHSSQLSALSLTEGGLVRIEAIQNQIEQYSTETANPDLFTHASFTMARAVVDDDIPTNMALMSMHWSAQFSLTKGVNQALDARVDPISKQPGFKCQPVTLTPVELALQGVVFGQHYSSAHGLCWQVAQTLENGVCHHIGFTDTDDGFAYQATVHSLKWTLTVVGQPLYIQCNMDKGLLKALKVLSHTQVNVALYQMNDFIGKPVDKQLIKQLHQQIKAGNSPLICACTGVTEANINDEINQQFNDQVMSDGLANISFEQALDSTQLLLGCGRQCGSCHSEVKQCAKQSWKDALSYCESYSDIDHQPSVAEDVA.

One can recognise a 4Fe-4S Mo/W bis-MGD-type domain in the interval 1 to 64 (MSVVQSSCAY…RLLDSLAQPN (64 aa)). Residues cysteine 8, cysteine 11, cysteine 15, and cysteine 50 each coordinate [4Fe-4S] cluster.

Belongs to the prokaryotic molybdopterin-containing oxidoreductase family. NasA/NapA/NarB subfamily. [4Fe-4S] cluster serves as cofactor. Requires Mo-bis(molybdopterin guanine dinucleotide) as cofactor.

The protein localises to the cytoplasm. It carries out the reaction nitrate + a quinol = a quinone + nitrite + H2O. The protein operates within nitrogen metabolism; nitrate reduction (assimilation). Nitrate reductase is a key enzyme involved in the first step of nitrate assimilation in plants, fungi and bacteria. The chain is Nitrate reductase from Shewanella frigidimarina (strain NCIMB 400).